A 588-amino-acid polypeptide reads, in one-letter code: Phenol 2-monooxygenase fsqG (588 aa).

FAD is bound by residues 9-38, 17-18, 37-39, 45-50, Tyr-232, 289-299, Asp-299, and 309-313; these read DVLI…LIDW, PA, DWK, TGRADG, ARHNRIFLAGD, and GQGMN. Residues Asp-49 and Tyr-232 each contribute to the substrate site.

The protein belongs to the PheA/TfdB FAD monooxygenase family. As to quaternary structure, homodimer. FAD serves as cofactor.

The protein operates within secondary metabolite biosynthesis. In terms of biological role, phenol 2-monooxygenase; part of the gene cluster that mediates the biosynthesis of the isoquinoline alkaloids fumisoquin A, fumisoquin B and fumisoquin C; as well as small amounts of fumipyrrole as a shunt metabolite. The products of the cluster lead to a brown coloration and are important for growth and conidiation. The nonribosomal peptide synthetase-like protein fsqF, which lacks a canonical condensation domain, is required for addition of a serine-derived dehydroalanine moiety to activated tyrosine but is not essential for the subsequent steps leading to isoquinoline formation. A different enzyme, most likely the ATP-grasp enzyme fsqD, is responsible for activation of tyrosine. Three additional enzymes encoded by the fsq cluster, the N-methyltransferase fsqC, the phenol 2-monooxygenase fsqG and the FAD-dependent oxidase fsqB, catalyze the formation of the isoquinoline ring system in the fumisoquins. FsqB converts the fspF thiolation domain-bound (2S,4S,5S)-2-amino-6-(3,4-dihydroxyphenyl)-4-hydroxy-5-(methylamino)hexanoyl into isoquinoline. The cyclization most likely proceeds via a two-step mechanism, beginning with FAD-dependent oxidation of the methyl group to an iminium species followed by electrophilic attack on the deprotonated phenol. This chain is Phenol 2-monooxygenase fsqG, found in Aspergillus fumigatus (strain ATCC MYA-4609 / CBS 101355 / FGSC A1100 / Af293) (Neosartorya fumigata).